Consider the following 1346-residue polypeptide: Adhesion G protein-coupled receptor A3 (1346 aa).

The N-terminal stretch at 1–21 is a signal peptide; sequence MSVLCVLLLAFVLPLRGSSSA. The tract at residues 18-45 is disordered; the sequence is SSSAGSTECKTYDERSRSAGKSSPSGAT. Residues 22 to 739 are Extracellular-facing; that stretch reads GSTECKTYDE…NVFIFRPLHP (718 aa). 4 LRR repeats span residues 66–90, 91–114, 116–138, and 139–162; these read FPNRTVSLILSNNKIQELLNGSFVG, LSSLERLDIKNNIITHIEPGAFYG, FSLKRLDLSKNLIGCLHVDVFKG, and LTNLVKLNLSENKFSSLSQGIFDS. The LRRCT domain maps to 176 to 223; the sequence is LLCDCNLQWLVVWIKEKAIGVKETRCSFPRSLQGQLITTLRAETLTCD. The 99-residue stretch at 229–327 folds into the Ig-like domain; sequence PSFQMTPSQH…GNNTRTVHIV (99 aa). Cys-251 and Cys-311 are disulfide-bonded. LRR repeat units lie at residues 503 to 529, 574 to 600, and 611 to 632; these read LQRIALLRVSNGALAYSTNSPNIALEA, TSNLSALALKNTIVEASLQLPPTLFSS, and VYKLHLLAFRNGKLFPPTGNSS. The GAIN-B domain maps to 563–728; sequence PERQLSFKCN…AVLMDLNRTG (166 aa). The tract at residues 679–728 is GPS; the sequence is PAFWNFSLQGGQGGWQSDGCRILHQDDNFTTVSCHSLNSYAVLMDLNRTG. A disulfide bridge connects residues Cys-698 and Cys-712. A helical membrane pass occupies residues 740–760; that stretch reads VIYSTALVLVLCLLSVIVSYI. The Cytoplasmic segment spans residues 761-773; the sequence is YHHKSVRISKKCW. The helical transmembrane segment at 774-794 threads the bilayer; that stretch reads HMLVNLCLHILLTCAVFVGGI. At 795–804 the chain is on the extracellular side; it reads NQTYNASVCQ. Residues 805–825 traverse the membrane as a helical segment; it reads AMGIVLHYSTLATALWSGVTA. The Cytoplasmic segment spans residues 826 to 854; sequence RNIYKQVTRKAKRYEELDEPPPPPRPMLR. The helical transmembrane segment at 855–875 threads the bilayer; that stretch reads FYLIGGGIPIIVCGITAAANI. Topologically, residues 876-897 are extracellular; sequence KNYGSQVNAPYCWMAWEPSLGA. The chain crosses the membrane as a helical span at residues 898–918; it reads FYGPAAFIVFVDCMYFLSILI. Topologically, residues 919–977 are cytoplasmic; the sequence is QLRRHPERRFELKEQSEEQQHLSVTEATEITPVHLESSPTAQPVPMSALENEHTFVSQL. Residues 978–998 form a helical membrane-spanning segment; the sequence is MGVAGSLTLYAALWVFGALAI. Over 999–1005 the chain is Extracellular; it reads SQEHPAD. The chain crosses the membrane as a helical span at residues 1006-1026; that stretch reads LVFACLFGALALGLGAFLVAH. Residues 1027–1346 are Cytoplasmic-facing; sequence HCVNRQDMRR…TGLWKHETTV (320 aa). Residues 1157 to 1169 show a composition bias toward polar residues; that stretch reads SVNNNNLPGNANI. Disordered regions lie at residues 1157 to 1188 and 1202 to 1284; these read SVNNNNLPGNANITGHPGRHHKNRSRAHRASR and SVEG…DGSE. 2 stretches are compositionally biased toward basic residues: residues 1173-1187 and 1212-1226; these read PGRHHKNRSRAHRAS and NKRHHHESLHARNSR. A compositionally biased stretch (low complexity) spans 1238–1252; it reads QSQLQQDSSDAASTS. The segment covering 1266–1280 has biased composition (gly residues); the sequence is IGNGFGHGISNGGLL. The short motif at 1344 to 1346 is the PDZ-binding element; the sequence is TTV.

Belongs to the G-protein coupled receptor 2 family. Adhesion G-protein coupled receptor (ADGR) subfamily. In terms of assembly, interacts (via PDZ-binding motif) with disheveled proteins; leading to the localization of dishevelled proteins to specific membrane subdomains. In terms of tissue distribution, ubiquitously expressed at very low levels.

The protein resides in the cell membrane. In terms of biological role, orphan receptor that acts as a critical modulator of planar cell polarity during gastrulation. Controls the localization of dishevelled. The sequence is that of Adhesion G protein-coupled receptor A3 (adgra3) from Danio rerio (Zebrafish).